The sequence spans 506 residues: ATP synthase subunit alpha (506 aa).

Position 170–177 (Gly-170–Thr-177) interacts with ATP.

This sequence belongs to the ATPase alpha/beta chains family. F-type ATPases have 2 components, CF(1) - the catalytic core - and CF(0) - the membrane proton channel. CF(1) has five subunits: alpha(3), beta(3), gamma(1), delta(1), epsilon(1). CF(0) has four main subunits: a(1), b(1), b'(1) and c(9-12).

Its subcellular location is the cellular thylakoid membrane. The catalysed reaction is ATP + H2O + 4 H(+)(in) = ADP + phosphate + 5 H(+)(out). Functionally, produces ATP from ADP in the presence of a proton gradient across the membrane. The alpha chain is a regulatory subunit. This chain is ATP synthase subunit alpha, found in Synechococcus sp. (strain JA-2-3B'a(2-13)) (Cyanobacteria bacterium Yellowstone B-Prime).